The sequence spans 106 residues: ATP-dependent Clp protease adapter protein ClpS (106 aa).

The protein belongs to the ClpS family. In terms of assembly, binds to the N-terminal domain of the chaperone ClpA.

In terms of biological role, involved in the modulation of the specificity of the ClpAP-mediated ATP-dependent protein degradation. This Escherichia coli O127:H6 (strain E2348/69 / EPEC) protein is ATP-dependent Clp protease adapter protein ClpS.